A 182-amino-acid polypeptide reads, in one-letter code: Putative manganese efflux pump MntP 1 (182 aa).

6 consecutive transmembrane segments (helical) span residues 4–24, 42–62, 63–83, 103–123, 127–147, and 162–182; these read LLLLSLALSMDAFAVSLGLGA, IFQGIMPLLGFFVGVTFIAFI, SAFDHYLAFGILALIGAKMIY, LILSIATSIDALAAGVSLHLI, VFLSCTIIAFTTFLLSYLGVL, and ILGGVILIGIGSKILLEHLFF.

It belongs to the MntP (TC 9.B.29) family.

The protein localises to the cell inner membrane. Its function is as follows. Probably functions as a manganese efflux pump. This chain is Putative manganese efflux pump MntP 1, found in Wolinella succinogenes (strain ATCC 29543 / DSM 1740 / CCUG 13145 / JCM 31913 / LMG 7466 / NCTC 11488 / FDC 602W) (Vibrio succinogenes).